Consider the following 128-residue polypeptide: Small ribosomal subunit protein uS9 (128 aa).

The tract at residues 105–128 is disordered; sequence DPRSVERKKPGQPKARRRFQFSKR. A compositionally biased stretch (basic residues) spans 114–128; sequence PGQPKARRRFQFSKR.

The protein belongs to the universal ribosomal protein uS9 family.

The protein is Small ribosomal subunit protein uS9 of Bacteroides thetaiotaomicron (strain ATCC 29148 / DSM 2079 / JCM 5827 / CCUG 10774 / NCTC 10582 / VPI-5482 / E50).